The primary structure comprises 89 residues: Small ribosomal subunit protein uS15 (89 aa).

The protein belongs to the universal ribosomal protein uS15 family. In terms of assembly, part of the 30S ribosomal subunit. Forms a bridge to the 50S subunit in the 70S ribosome, contacting the 23S rRNA.

One of the primary rRNA binding proteins, it binds directly to 16S rRNA where it helps nucleate assembly of the platform of the 30S subunit by binding and bridging several RNA helices of the 16S rRNA. Functionally, forms an intersubunit bridge (bridge B4) with the 23S rRNA of the 50S subunit in the ribosome. The chain is Small ribosomal subunit protein uS15 from Azotobacter vinelandii (strain DJ / ATCC BAA-1303).